A 440-amino-acid polypeptide reads, in one-letter code: D-serine dehydratase (440 aa).

Lys116 is modified (N6-(pyridoxal phosphate)lysine).

It belongs to the serine/threonine dehydratase family. DsdA subfamily. Monomer. The cofactor is pyridoxal 5'-phosphate.

The catalysed reaction is D-serine = pyruvate + NH4(+). This Salmonella enteritidis PT4 (strain P125109) protein is D-serine dehydratase.